The chain runs to 428 residues: ATP-dependent RNA helicase RhlB (428 aa).

The Q motif signature appears at 9 to 37 (QKFSDFALHPLVVEALENKGFQYCTPIQA). The region spanning 40–219 (LPLTLSGRDV…FEQMNNAEYV (180 aa)) is the Helicase ATP-binding domain. Position 53-60 (53-60 (AQTGTGKT)) interacts with ATP. Positions 165-168 (DEAD) match the DEAD box motif. The Helicase C-terminal domain occupies 245–390 (RLLQTLIEEE…VSKYNSDALL (146 aa)). Residues 394–428 (PAPKRLARTRTGNGPRRNSAPRRSGAPRNNRKRPG) form a disordered region.

This sequence belongs to the DEAD box helicase family. RhlB subfamily. In terms of assembly, component of the RNA degradosome, which is a multiprotein complex involved in RNA processing and mRNA degradation.

The protein resides in the cytoplasm. The catalysed reaction is ATP + H2O = ADP + phosphate + H(+). In terms of biological role, DEAD-box RNA helicase involved in RNA degradation. Has RNA-dependent ATPase activity and unwinds double-stranded RNA. This Yersinia pseudotuberculosis serotype O:1b (strain IP 31758) protein is ATP-dependent RNA helicase RhlB.